The following is a 433-amino-acid chain: Ribosomal protein uS12 methylthiotransferase RimO (433 aa).

Residues 6–122 enclose the MTTase N-terminal domain; it reads QSIFLLSLGC…IISVLGGSYR (117 aa). Residues Cys-15, Cys-51, Cys-85, Cys-146, Cys-150, and Cys-153 each contribute to the [4Fe-4S] cluster site. Residues 132-362 form the Radical SAM core domain; it reads LTPPHYAWLK…MELQESIAAE (231 aa). In terms of domain architecture, TRAM spans 365 to 432; sequence RELEGRVMKV…AYELHGRVND (68 aa).

The protein belongs to the methylthiotransferase family. RimO subfamily. [4Fe-4S] cluster serves as cofactor.

It localises to the cytoplasm. It carries out the reaction L-aspartate(89)-[ribosomal protein uS12]-hydrogen + (sulfur carrier)-SH + AH2 + 2 S-adenosyl-L-methionine = 3-methylsulfanyl-L-aspartate(89)-[ribosomal protein uS12]-hydrogen + (sulfur carrier)-H + 5'-deoxyadenosine + L-methionine + A + S-adenosyl-L-homocysteine + 2 H(+). Functionally, catalyzes the methylthiolation of an aspartic acid residue of ribosomal protein uS12. The polypeptide is Ribosomal protein uS12 methylthiotransferase RimO (Prosthecochloris aestuarii (strain DSM 271 / SK 413)).